We begin with the raw amino-acid sequence, 188 residues long: Viral FLICE protein (188 aa).

2 consecutive DED domains span residues 2-74 and 93-169; these read ATYE…DLLH and PYQL…QVQT.

As to quaternary structure, interacts with host RIPK1, TRAF2, MAP3K14, IKBKB, and IKBKG. Interacts with host CADM1; this interaction is essential for chronic NF-kappa-B activation.

Its function is as follows. Plays a role in the modulation of host signaling pathways by acting as an activator of both the classic and the alternative NF-kappa-B pathways. Thereby, initiates an important range of cellular processes to promote cell survival, proliferation and protection from apoptosis. The sequence is that of Viral FLICE protein (ORF71) from Human herpesvirus 8 type P (isolate GK18) (HHV-8).